Here is a 327-residue protein sequence, read N- to C-terminus: MKLPAFLSLLALVLLEAGTASLPKERKRRDEMHGEGDSYVVLGNYVLGPDNYDEVIDLSDYEGLMDYGDQLPEAKVTNLAPPTGISSAQSTMTPRTLSLKPTMIRPTELGVLGSPNSHGLPTCLICVCLGSSVYCDDADLENIPPLPKTTTYLYARFNRIRRIRAGDFKGLTKLKRIDLSSNSISSIDDDALRLLPALQDLILPENQLAALPALPPAIEVLDARHNQLQSSGIQPEALRALEKLQFLYLADNLLDSIPGPLPPSLRSLHLQNNLIETMQTDAFCDPEEHKHSRRWLEDIRLDGNPINLGLFPSAYFCLPRLPTGHCC.

Positions 1–19 are cleaved as a signal peptide; that stretch reads MKLPAFLSLLALVLLEAGT. Sulfotyrosine is present on residues tyrosine 61 and tyrosine 67. The 38-residue stretch at 111–148 folds into the LRRNT domain; it reads VLGSPNSHGLPTCLICVCLGSSVYCDDADLENIPPLPK. LRR repeat units lie at residues 149-170, 173-194, 197-218, 219-237, 243-263, 264-285, and 295-315; these read TTTYLYARFNRIRRIRAGDFKG, KLKRIDLSSNSISSIDDDALRL, ALQDLILPENQLAALPALPPAI, EVLDARHNQLQSSGIQPEA, KLQFLYLADNLLDSIPGPLPP, SLRSLHLQNNLIETMQTDAFCD, and WLEDIRLDGNPINLGLFPSAY. Cysteine 284 and cysteine 317 are joined by a disulfide.

Belongs to the small leucine-rich proteoglycan (SLRP) family. SLRP class III subfamily. In terms of assembly, homodimer. Post-translationally, O-glycosylated. Proteolytically cleaved by MMP1, MMP2, MMP3, MMP7, MMP8, MMP9, ADAMTS4, and ADAMTS5. Proteolytically cleaved by MMP13. In terms of processing, sulfated on tyrosine residues. In terms of tissue distribution, ocular tissues, cartilage, ligament, skin, muscle and testes.

Its subcellular location is the secreted. It is found in the extracellular space. It localises to the extracellular matrix. Functionally, inhibits angiogenesis in the vitreous humor of the eye, and therefore represses neovascularization. Binds collagen fibrils. May be involved in collagen fiber organization via regulation of other members of the small leucine-rich repeat proteoglycan superfamily. This is Opticin (OPTC) from Canis lupus familiaris (Dog).